The chain runs to 314 residues: DNA-directed RNA polymerase subunit alpha (314 aa).

The alpha N-terminal domain (alpha-NTD) stretch occupies residues 1 to 228 (MIEFEKPNIH…DHLSIFVNLT (228 aa)). The tract at residues 245–314 (KEKMLEMTIE…DLGLSLRKED (70 aa)) is alpha C-terminal domain (alpha-CTD).

Belongs to the RNA polymerase alpha chain family. As to quaternary structure, homodimer. The RNAP catalytic core consists of 2 alpha, 1 beta, 1 beta' and 1 omega subunit. When a sigma factor is associated with the core the holoenzyme is formed, which can initiate transcription.

It carries out the reaction RNA(n) + a ribonucleoside 5'-triphosphate = RNA(n+1) + diphosphate. Its function is as follows. DNA-dependent RNA polymerase catalyzes the transcription of DNA into RNA using the four ribonucleoside triphosphates as substrates. This chain is DNA-directed RNA polymerase subunit alpha, found in Lactiplantibacillus plantarum (strain ATCC BAA-793 / NCIMB 8826 / WCFS1) (Lactobacillus plantarum).